A 311-amino-acid chain; its full sequence is Meteorin-like protein (311 aa).

The segment covering 1-13 (MRGAARAAWGRAG) has biased composition (low complexity). The interval 1–24 (MRGAARAAWGRAGQPWPRPPAPGP) is disordered. Residues 1–45 (MRGAARAAWGRAGQPWPRPPAPGPPPPPLPLLLLLLAGLLGGAGA) form the signal peptide. 5 disulfide bridges follow: Cys52-Cys75, Cys107-Cys143, Cys188-Cys260, Cys191-Cys284, and Cys201-Cys306.

It belongs to the meteorin family. As to expression, highly expressed in the skeletal muscle, in subcutaneous adipose tissue, epididymal white adipose tissue depots and heart. Also expressed in brown adipose tissues and kidney.

The protein resides in the secreted. Hormone induced following exercise or cold exposure that promotes energy expenditure. Induced either in the skeletal muscle after exercise or in adipose tissue following cold exposure and is present in the circulation. Able to stimulate energy expenditure associated with the browning of the white fat depots and improves glucose tolerance. Does not promote an increase in a thermogenic gene program via direct action on adipocytes, but acts by stimulating several immune cell subtypes to enter the adipose tissue and activate their prothermogenic actions. Stimulates an eosinophil-dependent increase in IL4 expression and promotes alternative activation of adipose tissue macrophages, which are required for the increased expression of the thermogenic and anti-inflammatory gene programs in fat. Required for some cold-induced thermogenic responses, suggesting a role in metabolic adaptations to cold temperatures. This chain is Meteorin-like protein (METRNL), found in Homo sapiens (Human).